The sequence spans 388 residues: Glucose-1-phosphate adenylyltransferase (388 aa).

Residues Tyr100, Gly165, 180 to 181, and Ser191 contribute to the alpha-D-glucose 1-phosphate site; that span reads EK.

It belongs to the bacterial/plant glucose-1-phosphate adenylyltransferase family. Homotetramer.

It carries out the reaction alpha-D-glucose 1-phosphate + ATP + H(+) = ADP-alpha-D-glucose + diphosphate. Its pathway is glycan biosynthesis; glycogen biosynthesis. In terms of biological role, involved in the biosynthesis of ADP-glucose, a building block required for the elongation reactions to produce glycogen. Catalyzes the reaction between ATP and alpha-D-glucose 1-phosphate (G1P) to produce pyrophosphate and ADP-Glc. The protein is Glucose-1-phosphate adenylyltransferase of Clostridium perfringens (strain SM101 / Type A).